The following is a 516-amino-acid chain: Protein phosphatase 1H (516 aa).

2 disordered regions span residues 102 to 122 (ADPS…PSGD) and 181 to 202 (PPTC…SGSQ). Positions 106-506 (SVSYTPSRRR…DDISVFIIPL (401 aa)) constitute a PPM-type phosphatase domain. Positions 190–202 (PNPQLHASASGSQ) are enriched in polar residues.

It belongs to the PP2C family.

It localises to the nucleus. Its subcellular location is the cytoplasm. It catalyses the reaction O-phospho-L-seryl-[protein] + H2O = L-seryl-[protein] + phosphate. The enzyme catalyses O-phospho-L-threonyl-[protein] + H2O = L-threonyl-[protein] + phosphate. The polypeptide is Protein phosphatase 1H (ppm1h) (Danio rerio (Zebrafish)).